A 160-amino-acid chain; its full sequence is Cyanate hydratase (160 aa).

Active-site residues include R100, E103, and S126.

The protein belongs to the cyanase family.

The catalysed reaction is cyanate + hydrogencarbonate + 3 H(+) = NH4(+) + 2 CO2. Its function is as follows. Catalyzes the reaction of cyanate with bicarbonate to produce ammonia and carbon dioxide. This chain is Cyanate hydratase, found in Aspergillus flavus (strain ATCC 200026 / FGSC A1120 / IAM 13836 / NRRL 3357 / JCM 12722 / SRRC 167).